The chain runs to 292 residues: Acetylglutamate kinase (292 aa).

Substrate contacts are provided by residues 64–65, Arg86, and Asn190; that span reads GG.

Belongs to the acetylglutamate kinase family. ArgB subfamily.

It is found in the cytoplasm. It carries out the reaction N-acetyl-L-glutamate + ATP = N-acetyl-L-glutamyl 5-phosphate + ADP. It participates in amino-acid biosynthesis; L-arginine biosynthesis; N(2)-acetyl-L-ornithine from L-glutamate: step 2/4. Functionally, catalyzes the ATP-dependent phosphorylation of N-acetyl-L-glutamate. In Citrifermentans bemidjiense (strain ATCC BAA-1014 / DSM 16622 / JCM 12645 / Bem) (Geobacter bemidjiensis), this protein is Acetylglutamate kinase.